The chain runs to 432 residues: ATP-dependent RNA helicase RhlB (432 aa).

Positions 9–37 (QNFADLGLQPQVIDGLNAKGFIKCTPIQA) match the Q motif motif. The Helicase ATP-binding domain occupies 40–219 (LPVLLAGQDI…FEHMQEPEHV (180 aa)). 53-60 (AQTGTGKT) provides a ligand contact to ATP. The DEAD box motif lies at 165–168 (DEAD). Positions 245 to 390 (ALLQTLIEEE…QSDYDASALL (146 aa)) constitute a Helicase C-terminal domain. The interval 396 to 432 (PLRLQRRPQQNRRNNNGQRQGGNRKHTRPRQPRNTQS) is disordered. Residues 417 to 426 (GNRKHTRPRQ) show a composition bias toward basic residues.

This sequence belongs to the DEAD box helicase family. RhlB subfamily. As to quaternary structure, component of the RNA degradosome, which is a multiprotein complex involved in RNA processing and mRNA degradation.

It is found in the cytoplasm. The enzyme catalyses ATP + H2O = ADP + phosphate + H(+). Its function is as follows. DEAD-box RNA helicase involved in RNA degradation. Has RNA-dependent ATPase activity and unwinds double-stranded RNA. This chain is ATP-dependent RNA helicase RhlB, found in Aliivibrio fischeri (strain ATCC 700601 / ES114) (Vibrio fischeri).